The primary structure comprises 185 residues: Keratin-associated protein 4-8 (185 aa).

25 repeat units span residues 14–18 (GCGQD), 19–23 (LCQET), 24–28 (CCCPS), 39–43 (CYRPS), 44–48 (YSVSC), 49–53 (CCRPQ), 54–58 (CCQSV), 59–63 (CCQPT), 64–68 (CCRPS), 69–73 (CCVSS), 74–78 (CCKPQ), 79–83 (CCQSV), 84–88 (CCQPT), 89–93 (CCHPS), 94–98 (CCISS), 99–103 (CCRPS), 104–108 (CCVSS), 109–113 (CCKPQ), 114–118 (CCQSV), 119–123 (CCQPN), 124–128 (CCRPS), 134–138 (CCRPS), 139–143 (CCESS), 144–148 (CCRPC), and 149–164 (CCLR…HTTC). Residues 14–164 (GCGQDLCQET…CGRVSCHTTC (151 aa)) are 25 X 5 AA repeats of C-C-[IKRQVHEC]-[SPRT]-[STCVQPR].

It belongs to the KRTAP type 4 family. In terms of assembly, interacts with hair keratins. In terms of tissue distribution, expressed in the hair follicles.

Its function is as follows. In the hair cortex, hair keratin intermediate filaments are embedded in an interfilamentous matrix, consisting of hair keratin-associated proteins (KRTAP), which are essential for the formation of a rigid and resistant hair shaft through their extensive disulfide bond cross-linking with abundant cysteine residues of hair keratins. The matrix proteins include the high-sulfur and high-glycine-tyrosine keratins. In Homo sapiens (Human), this protein is Keratin-associated protein 4-8 (KRTAP4-8).